We begin with the raw amino-acid sequence, 176 residues long: Ribosome rescue factor SmrB (176 aa).

Residues 93 to 168 (LDLHGYRQSE…GDAALLVLID (76 aa)) enclose the Smr domain.

Belongs to the SmrB family. As to quaternary structure, associates with collided ribosomes, but not with correctly translating polysomes.

Acts as a ribosome collision sensor. Detects stalled/collided disomes (pairs of ribosomes where the leading ribosome is stalled and a second ribosome has collided with it) and endonucleolytically cleaves mRNA at the 5' boundary of the stalled ribosome. Stalled/collided disomes form a new interface (primarily via the 30S subunits) that binds SmrB. Cleaved mRNA becomes available for tmRNA ligation, leading to ribosomal subunit dissociation and rescue of stalled ribosomes. The sequence is that of Ribosome rescue factor SmrB from Shewanella baltica (strain OS195).